The chain runs to 833 residues: Scavenger receptor class F member 2 (833 aa).

An N-terminal signal peptide occupies residues 1–33 (MEGAGSRGAGPARRQGARGLGLLLLLWLLPGLA). The Extracellular segment spans residues 34–433 (APQDLNPRGR…ACHLETNQRK (400 aa)). 6 consecutive EGF-like domains span residues 63 to 102 (LGDE…ANCD), 114 to 145 (CKER…ARCE), 140 to 174 (WGAR…AQCA), 175 to 204 (SACY…RSCN), 205 to 233 (NQCA…ARCD), and 228 to 262 (FGAR…KYCR). 18 disulfides stabilise this stretch: Cys-67-Cys-78, Cys-72-Cys-90, Cys-92-Cys-101, Cys-118-Cys-126, Cys-120-Cys-133, Cys-135-Cys-144, Cys-148-Cys-155, Cys-150-Cys-162, Cys-164-Cys-173, Cys-177-Cys-185, Cys-179-Cys-192, Cys-194-Cys-203, Cys-207-Cys-214, Cys-209-Cys-221, Cys-223-Cys-232, Cys-236-Cys-243, Cys-238-Cys-250, and Cys-252-Cys-261. Asn-75 is a glycosylation site (N-linked (GlcNAc...) asparagine). N-linked (GlcNAc...) asparagine glycosylation is found at Asn-302 and Asn-357. An EGF-like 7 domain is found at 364-395 (CAFVCSDCGSGHCDFQSGRCLCSPGVHGPHCN). Disulfide bonds link Cys-368-Cys-376, Cys-371-Cys-383, and Cys-385-Cys-394. A glycan (N-linked (GlcNAc...) asparagine) is linked at Asn-395. The helical transmembrane segment at 434–454 (GVMGAGALLTLLLGLLLSLLG) threads the bilayer. The Cytoplasmic portion of the chain corresponds to 455 to 833 (CCCACRGKDS…SRAGTAPGAS (379 aa)). Ser-538 and Ser-600 each carry phosphoserine. The tract at residues 578 to 833 (SLEPTGTSTP…SRAGTAPGAS (256 aa)) is disordered. The residue at position 615 (Tyr-615) is a Phosphotyrosine. The segment covering 619–630 (ARREARPARTRN) has biased composition (basic and acidic residues). A phosphoserine mark is found at Ser-638, Ser-640, and Ser-695. Thr-712 carries the phosphothreonine modification. Residues 748-761 (ELRDKTRSLGRAEK) are compositionally biased toward basic and acidic residues. Low complexity predominate over residues 781–798 (ASASEASGSEKAAASAPA). The segment covering 804–816 (KKTPIQKPPRKKS) has biased composition (basic residues).

In terms of assembly, homophilic and heterophilic interaction via its extracellular domain. Interacts with SCARF1. The heterophilic interaction with SCARF1, which is stronger than the homophilic interaction with itself, is suppressed by the presence of SCARF1 ligand such as Ac-LDL.

It is found in the membrane. Probable adhesion protein, which mediates homophilic and heterophilic interactions. In contrast to SCARF1, it poorly mediates the binding and degradation of acetylated low density lipoprotein (Ac-LDL). The chain is Scavenger receptor class F member 2 (Scarf2) from Mus musculus (Mouse).